Reading from the N-terminus, the 117-residue chain is Large ribosomal subunit protein bL20 (117 aa).

It belongs to the bacterial ribosomal protein bL20 family.

In terms of biological role, binds directly to 23S ribosomal RNA and is necessary for the in vitro assembly process of the 50S ribosomal subunit. It is not involved in the protein synthesizing functions of that subunit. This chain is Large ribosomal subunit protein bL20, found in Geobacter sulfurreducens (strain ATCC 51573 / DSM 12127 / PCA).